The chain runs to 504 residues: Anaerobic nitric oxide reductase transcription regulator NorR (504 aa).

4-aspartylphosphate is present on Asp-57. The Sigma-54 factor interaction domain occupies 187–416 (MIGLSPGMTQ…LEHAIHRAVV (230 aa)). ATP is bound by residues 215–222 (GETGTGKE) and 278–287 (ADNGTLFLDE). The segment at residues 479–498 (WAACARMLETDVANLHRLAK) is a DNA-binding region (H-T-H motif).

It functions in the pathway nitrogen metabolism; nitric oxide reduction. Required for the expression of anaerobic nitric oxide (NO) reductase, acts as a transcriptional activator for at least the norVW operon. Activation also requires sigma-54. The sequence is that of Anaerobic nitric oxide reductase transcription regulator NorR from Escherichia coli O45:K1 (strain S88 / ExPEC).